Here is a 1659-residue protein sequence, read N- to C-terminus: MRAVVLALTLALVASQSVNFAPDFAASKTYVYKYEALLLGGLPEEGLARAGVKVISKVLISAVAENTYLLKLVNPEIFEYSGVWPKDPFVPAAKLTSALAAQFSIPIKFEYAKGVVGKVLAPTAVSETVLNVHRGILNILQLNIKKTQNVYELQEAGAQGVCKTHYVIREDAKAERIHLTKSKDLNNCQQRIMKDFGLAYTEKCVECRQRGEALMGAATYNYLMKPADNGALILEATVTELHQFTPFNEMSGAAQMEAKQMLTFVEIKKDPIIVPDNNYVHRGSIRYEFATEILQMPIQLLKISNARAQAVKILNHLVTYNTAPVHEDAPLKFLQFIQLLRMASSETINAIWAEFKAKPAYRHWILDAVPSIGSSVAVRFIKEKFLAGDITIFEAAQALVAAVHMVAADLETVKLVESLAFNHKIQTHPVLRELTMLGYGTMVSKYCVEHPNCPAELVKPIHELAVQAVANSKFEELSMVLKALGNAGHPASIKPITKLLPVFGTAAAALPLRVQADAVLALRNIAKREPRMVQEVAVQLFMDKALHPELRMLACIVLFETKPPMGLVITLASILKTEKNMQVASFTYSHMMSLTRSTAPDFASVAAACNVAVKMLSNKFRRLSCHFSQAIHLDAYSNPLRIGAAASAFYINDAATLFPRTVVAKARTYFAGAAADVLEVGVRTEGIQEALLKLPPAPENADRITKMRRVIKALSDWRSLATSKPLASIYVKFFGQEIAFANIDKSIIDQALQLANSPSAHALGRNALKALLAGATFQYVKPLLAAEVRRIFPTAVGLPMELSYYTAAVAKAYVNVRATLTPALPETFHAAQLLKTNIELHAEVRPSIVMHTFAVMGVNTAFIQAAIMARAKVRTIVPAKFAAQLDIANGNFKFEAFPVSPPEHIAAAHIETFAVARNVEDVPAERITPLIPAQGVARSTQQSRDKLTSMIADSAASFAGSLSRSSEILYSDLPSNFKPIIKAIVVHLEETICVERLGVKACFEFTSESAAFIRNTLFYNMIGKHSVLISVKPSASEPAIERLEFEVQVGPKAAEKIIKVITMNEEEEAPEGKTVLLKLKKILLPDLKNGTRASSSSSSSSSSSSRSSSSRSRSRKSESSSSSSSSSSRISKRDGPDQPYNPNDRKFKKNHKDSQSTSNVISRSKSSASSFHAIYKQDKFLGNKLAPMVIILFRLVRADHKIEGYQVTAYLNKATSRLQIIMAALDENDNWKLCADGVLLSKHKVTAKIAWGAECKDYNTFITAETGLVGPSPAVRLRLSWDKLPKVPKAVWRYVRIVSEFIPGYIPYYLADLVPMQKDKNNEKQIQFTVVATSERTLDVILKTPKMTLYKLGVNLPCSLPFESMTDLSPFDDNIVNKIHYLFSEVNAVKCSMVRDTLTTFNNKKYKINMPLSCYQVLAQDCTTELKFMVLLKKDHASEQNHINVKISDIDVDLYTEDHGVIVKVNEMEISNDNLPYKDPSGSIKIDRKGKGVSLYAPSHGLQEVYFDKYSWKIKVVDWMKGQTCGLCGKADGENRQEYRTPSGRLTKSSVSFAHSWVLPSDSCRDASECLMKLESVKLEKQVIVDDRESKCYSVEPVLRCLPGCLPVRTTPITIGFHCLPVDSNLNRSEGLSSIYEKSVDLMEKAEAHVACRCSEQCM.

Positions 1–15 (MRAVVLALTLALVAS) are cleaved as a signal peptide. The 639-residue stretch at 24 to 662 (FAASKTYVYK…DAATLFPRTV (639 aa)) folds into the Vitellogenin domain. Asn-1089 carries N-linked (GlcNAc...) asparagine glycosylation. Composition is skewed to low complexity over residues 1090-1111 (GTRASSSSSSSSSSSSRSSSSR) and 1119-1129 (SSSSSSSSSSR). The interval 1090-1163 (GTRASSSSSS…SQSTSNVISR (74 aa)) is disordered. The 177-residue stretch at 1389–1565 (VKCSMVRDTL…SWVLPSDSCR (177 aa)) folds into the VWFD domain. 2 cysteine pairs are disulfide-bonded: Cys-1391-Cys-1528 and Cys-1414-Cys-1564. N-linked (GlcNAc...) asparagine glycosylation is present at Asn-1627.

In terms of processing, phosvitin, an egg yolk storage protein, is one of the most highly phosphorylated (10%) proteins in nature. Produced by the liver, secreted into the blood and then sequestered by receptor mediated endocytosis into growing oocytes, where it is generally cleaved, giving rise to the respective yolk components lipovitellin-I, phosvitin, lipovitellin-II.

In terms of biological role, precursor of the major egg-yolk proteins that are sources of nutrients during early development of oviparous organisms. This Oncorhynchus mykiss (Rainbow trout) protein is Vitellogenin (vtg1).